The chain runs to 176 residues: Putative Ras-related protein RABA4e (176 aa).

This sequence belongs to the small GTPase superfamily. Rab family.

The sequence is that of Putative Ras-related protein RABA4e (RABA4E) from Arabidopsis thaliana (Mouse-ear cress).